The primary structure comprises 236 residues: Orotidine 5'-phosphate decarboxylase (236 aa).

Substrate is bound by residues Asp-16, Lys-38, 65-74, Thr-123, Arg-184, Gln-193, Gly-213, and Arg-214; that span reads DLKLHDIGNT. Residue Lys-67 is the Proton donor of the active site.

Belongs to the OMP decarboxylase family. Type 1 subfamily. As to quaternary structure, homodimer.

It catalyses the reaction orotidine 5'-phosphate + H(+) = UMP + CO2. It participates in pyrimidine metabolism; UMP biosynthesis via de novo pathway; UMP from orotate: step 2/2. In terms of biological role, catalyzes the decarboxylation of orotidine 5'-monophosphate (OMP) to uridine 5'-monophosphate (UMP). The protein is Orotidine 5'-phosphate decarboxylase of Methylobacterium sp. (strain 4-46).